Here is a 1153-residue protein sequence, read N- to C-terminus: MNKNIFITLLISLLLLSGCTGDTCIDPDDFGFIKFNVSARYDPEEITSRQEGNQVAPWRDSAYKVNGYPLTIMVRPWSYILGDKNTSGQLSAWCPWYGQKNNTTTLAAFCVKLQPCTFWDNTRLDMCTPNPANQNDAMISNAPCIMTNGVGLYFLIAAKNTDPNISPDSQSKPQGITQHLGEELTSGYEFYSTSSTGQFSKAGGINYQYKGEDKSKYAQSPLYFKIIDKFYNDNSGQYRLVIKSGVTDTRADPLQFLTDLIKGVLFGKDGIIKKTYQQIIDTSGYRMSVSAILTLYIMFTGFSFLIGNINLTHVELIVRILKVSIVSILLSTDKAWTFFHDYLFVFFIDGVQQILQIINEASATGPGSQSLLGLLISPQTLSKLFSLLFVDWLGFIYIILYLIALYFIFFLIFKATIIYLTALITIGMIIIMGPIFICFMLFNITRSLFENWLRQLISYALQPIILFTGIAFISMIIRTEIYSTLGFAVCKHDFPNLGPINEIFGSFLEDIDPSLGHSIFYWWFPVPMKGGINNFHKANILVPKDHIVVDDSCKNDPDKCKHCAAYECIDERYIELPFLDLVKDAKRISNFINGKFVQLDGILLIFVSIYLLSKFNDTAISTAQFIAGTSGNLTEIQKVNQQSYESAAKQMNRPLNYVAKTVSAPVTSRVSAGKEQVRMFFAEKFENMMMGRLEKQALGSSANKTVQNEVKRKYGIDSKDVKMNAITDYENGIAGLLKNLPKGNELKAKELSQMKFTQLRDKIAANKYGVKDYAALSKEQKAELDKSLKDANLRELASDANFTRDYQDAYKNAHQEMSGRGVGLFGKNIGVLRSWQEIKHRVDTKRKLKEEKRVGIGEKIYAGYTGIKRGVLTAIVGKDLRDAYEGNLTSAEWHDFEYNDPRLRTYSEKLKDDEKAREHEELQMHINKEALAAQADILSPEYLARLEKAGRHSDVEYYQELAQRKLIHEVHGRLFEEGEPVMMGDRFMREKATDSQMRDMIDNAHRKHAEFIDGDRYIRRQEHYDIMHEKAQENLEQTYKELKDHFKRDDIKIEEMPALIAQKVKDTAEGAEIDQKITEELNNFNADVKNYEYSTEVLNKIEDRKQAITDEVNAQIDKINKYRENAKMQTYVKPIVNEGRKLRKLEDHLRNMK.

A signal peptide spans 1-18; sequence MNKNIFITLLISLLLLSG. C19 is lipidated: N-palmitoyl cysteine. C19 carries the S-diacylglycerol cysteine lipid modification. 4 helical membrane passes run 289–309, 393–413, 422–442, and 457–477; these read VSAI…IGNI, LGFI…FLIF, ALIT…FMLF, and ISYA…SMII.

It belongs to the TrbL/VirB6 family.

It localises to the cell membrane. This is an uncharacterized protein from Rickettsia conorii (strain ATCC VR-613 / Malish 7).